The following is a 197-amino-acid chain: Probable molybdenum cofactor guanylyltransferase (197 aa).

GTP-binding positions include 9-11, lysine 21, aspartate 65, and aspartate 94; that span reads LAG. Aspartate 94 contributes to the Mg(2+) binding site.

Belongs to the MobA family. It depends on Mg(2+) as a cofactor.

It localises to the cytoplasm. It carries out the reaction Mo-molybdopterin + GTP + H(+) = Mo-molybdopterin guanine dinucleotide + diphosphate. Transfers a GMP moiety from GTP to Mo-molybdopterin (Mo-MPT) cofactor (Moco or molybdenum cofactor) to form Mo-molybdopterin guanine dinucleotide (Mo-MGD) cofactor. The polypeptide is Probable molybdenum cofactor guanylyltransferase (Carboxydothermus hydrogenoformans (strain ATCC BAA-161 / DSM 6008 / Z-2901)).